Reading from the N-terminus, the 1862-residue chain is Transient receptor potential cation channel subfamily M member 7 (1862 aa).

At Met-1 the chain carries N-acetylmethionine. Residues 1 to 850 (MSQKSWIEST…ITRKFYAFYH (850 aa)) lie on the Cytoplasmic side of the membrane. Ser-101 carries the post-translational modification Phosphoserine. Positions 544 to 554 (NRRSGRNASSS) are enriched in low complexity. A disordered region spans residues 544–574 (NRRSGRNASSSTPQLRKSHETFGNRADKKEK). Residues 560-573 (KSHETFGNRADKKE) are compositionally biased toward basic and acidic residues. A helical transmembrane segment spans residues 851-876 (APIVKFWFNTLAYLGFLMLYTFVVLV). Residues 877–882 (QMEQLP) are Extracellular-facing. Residues 883 to 904 (SVQEWIVIAYIFTYAIEKIREV) form a helical membrane-spanning segment. Topologically, residues 905 to 923 (FMSEAGKISQKIKVWFSDY) are cytoplasmic. Residues 924 to 943 (FNVSDTIAIISFFVGFGLRF) form a helical membrane-spanning segment. The Extracellular segment spans residues 944–956 (GAKWNYINAYDNH). A helical transmembrane segment spans residues 957–980 (VFVAGRLIYCLNIIFWYVRLLDFL). Topologically, residues 981-999 (AVNQQAGPYVMMIGKMVAN) are cytoplasmic. A helical transmembrane segment spans residues 1000 to 1023 (MFYIVVIMALVLLSFGVPRKAILY). Over 1024 to 1025 (PH) the chain is Extracellular. Positions 1026–1066 (EEPSWSLAKDIVFHPYWMIFGEVYAYEIDVCANDSALPTIC) form an intramembrane region, pore-forming. Over 1067 to 1069 (GPG) the chain is Extracellular. A helical membrane pass occupies residues 1070–1098 (TWLTPFLQAVYLFVQYIIMVNLLIAFFNN). The Cytoplasmic segment spans residues 1099 to 1862 (VYLQVKAISN…EATNSVRLML (764 aa)). Residues Cys-1143, Cys-1144, and Cys-1146 are each lipidated (S-palmitoyl cysteine). Thr-1163 is modified (phosphothreonine). 5 positions are modified to phosphoserine: Ser-1191, Ser-1193, Ser-1224, Ser-1255, and Ser-1258. Positions 1198-1250 (RVTFERVEQMSIQIKEVGDRVNYIKRSLQSLDSQIGHLQDLSALTVDTLKTLT) form a coiled coil. The residue at position 1265 (Thr-1265) is a Phosphothreonine. Residues Ser-1300, Ser-1357, Ser-1360, Ser-1385, Ser-1386, Ser-1389, Ser-1394, Ser-1395, and Ser-1403 each carry the phosphoserine modification. The segment at 1380–1418 (NQKLGSSPNSSPHMSSPPTKFSVSTPSQPSCKSHLESTT) is disordered. Over residues 1385–1397 (SSPNSSPHMSSPP) the composition is skewed to low complexity. The span at 1398 to 1410 (TKFSVSTPSQPSC) shows a compositional bias: polar residues. Residue Thr-1404 is modified to Phosphothreonine. A phosphoserine mark is found at Ser-1406 and Ser-1445. Thr-1454 is modified (phosphothreonine). Position 1455 is a phosphoserine (Ser-1455). A phosphothreonine mark is found at Thr-1466 and Thr-1470. Residues 1485–1511 (TPTSLHSEQESCSRRASTEDSPDVDSR) form a disordered region. A phosphoserine mark is found at Ser-1491, Ser-1497, Ser-1501, Ser-1510, and Ser-1530. Basic and acidic residues predominate over residues 1491–1502 (SEQESCSRRAST). Position 1534 is a phosphothreonine (Thr-1534). At Ser-1540 the chain carries Phosphoserine. Position 1548 is a phosphothreonine (Thr-1548). 2 positions are modified to phosphoserine: Ser-1564 and Ser-1566. A Phosphothreonine modification is found at Thr-1580. The region spanning 1591-1821 (ILNNSMSSWS…CCRKLKLPDL (231 aa)) is the Alpha-type protein kinase domain. Phosphoserine is present on residues Ser-1595 and Ser-1612. Gly-1618, Gly-1619, Leu-1620, Arg-1621, and Lys-1645 together coordinate ADP. Ser-1657 bears the Phosphoserine mark. Thr-1682 carries the phosphothreonine modification. The ADP site is built by Glu-1717, Glu-1718, and Met-1720. His-1750 provides a ligand contact to Zn(2+). The active-site Proton acceptor is the Asp-1764. An ADP-binding site is contributed by Asp-1774. The residue at position 1776 (Ser-1776) is a Phosphoserine. Positions 1807, 1809, and 1813 each coordinate Zn(2+). Thr-1827 carries the post-translational modification Phosphothreonine. The segment at 1840–1862 (DLNLQAGNSTKESEATNSVRLML) is disordered. Phosphoserine occurs at positions 1848 and 1857.

In the C-terminal section; belongs to the protein kinase superfamily. Alpha-type protein kinase family. ALPK subfamily. It in the N-terminal section; belongs to the transient receptor (TC 1.A.4) family. LTrpC subfamily. TRPM7 sub-subfamily. As to quaternary structure, homodimer. Homotetramer. Forms heteromers with TRPM6; heteromeric channels are functionally different from the homomeric channels. Interacts with PLCB1. The cofactor is Zn(2+). Palmitoylated; palmitoylation at Cys-1143, Cys-1144 and Cys-1146 promotes TRPM7 trafficking from the Golgi to the surface membrane. In terms of processing, autophosphorylated; autophosphorylation regulates TRPM7 kinase activity towards its substrates. Post-translationally, the C-terminal kinase domain can be cleaved from the channel segment in a cell-type-specific fashion. TRPM7 is cleaved by caspase-8, dissociating the kinase from the ion-conducting pore. The cleaved kinase fragments (M7CKs) can translocate to the cell nucleus and binds chromatin-remodeling complex proteins in a Zn(2+)-dependent manner to ultimately phosphorylate specific Ser/Thr residues of histones.

It is found in the cell membrane. The protein resides in the cytoplasmic vesicle membrane. It localises to the nucleus. It catalyses the reaction L-seryl-[protein] + ATP = O-phospho-L-seryl-[protein] + ADP + H(+). It carries out the reaction L-threonyl-[protein] + ATP = O-phospho-L-threonyl-[protein] + ADP + H(+). The catalysed reaction is Mg(2+)(in) = Mg(2+)(out). The enzyme catalyses Ca(2+)(in) = Ca(2+)(out). It catalyses the reaction Zn(2+)(in) = Zn(2+)(out). Channel displays constitutive activity. Channel activity is negatively regulated by cytosolic Mg(2+), Mg-ATP, low intracellular pH. Resting free cytosolic Mg(2+) and Mg-ATP concentrations seem to be sufficient to block native TRPM7 channel activity. TRPM7 channel activity is highly dependent on membrane levels of phosphatidylinositol 4,5 bisphosphate (PIP2). PIP2 hydrolysis negatively regulates TRPM7 channel activity. TRPM7 kinase activity does not affect channel activity. The kinase activity is controlled through the autophosphorylation of a serine/threonine-rich region located N-terminal to the catalytic domain. Functionally, bifunctional protein that combines an ion channel with an intrinsic kinase domain, enabling it to modulate cellular functions either by conducting ions through the pore or by phosphorylating downstream proteins via its kinase domain. The channel is highly permeable to divalent cations, specifically calcium (Ca2+), magnesium (Mg2+) and zinc (Zn2+) and mediates their influx. Controls a wide range of biological processes such as Ca2(+), Mg(2+) and Zn(2+) homeostasis, vesicular Zn(2+) release channel and intracellular Ca(2+) signaling, embryonic development, immune responses, cell motility, proliferation and differentiation. The C-terminal alpha-kinase domain autophosphorylates cytoplasmic residues of TRPM7. TRPM7 phosphorylates SMAD2, suggesting that TRPM7 kinase may play a role in activating SMAD signaling pathways. In vitro, TRPM7 kinase phosphorylates ANXA1 (annexin A1), myosin II isoforms and a variety of proteins with diverse cellular functions. The cleaved channel exhibits substantially higher current and potentiates Fas receptor signaling. Its function is as follows. The C-terminal kinase domain can be cleaved from the channel segment in a cell-type-specific fashion. In immune cells, the TRPM7 kinase domain is clipped from the channel domain by caspases in response to Fas-receptor stimulation. The cleaved kinase fragments can translocate to the nucleus, and bind chromatin-remodeling complex proteins in a Zn(2+)-dependent manner to ultimately phosphorylate specific Ser/Thr residues of histones known to be functionally important for cell differentiation and embryonic development. This is Transient receptor potential cation channel subfamily M member 7 from Rattus norvegicus (Rat).